Here is a 162-residue protein sequence, read N- to C-terminus: Novel acetylcholine receptor chaperone (162 aa).

Residues 1–5 (MASPR) lie on the Cytoplasmic side of the membrane. A helical transmembrane segment spans residues 6 to 26 (TVTIVALSVTLGLFFVFMGTI). Residues 27-61 (KLTPRLSKDAYSEMKRAYKSYVKALPALKKIGISS) are Lumenal-facing. A helical membrane pass occupies residues 62 to 82 (VFLRKAIGSLELACGIVLTLV). The Cytoplasmic portion of the chain corresponds to 83–88 (PGRPKD). The helical transmembrane segment at 89–109 (VANFILLLLVLIVLFFHQLVG) threads the bilayer. Residues 110 to 114 (DPLKR) are Lumenal-facing. The helical transmembrane segment at 115-131 (YAHALVFGILLTCRLLV) threads the bilayer. The Cytoplasmic segment spans residues 132-162 (SRQPEEEFPEKKLSRGNNGAHSREPIKMKVS). Residues 141–162 (EKKLSRGNNGAHSREPIKMKVS) are disordered. Positions 152–162 (HSREPIKMKVS) are enriched in basic and acidic residues.

The protein belongs to the DoxX family.

It is found in the peroxisome membrane. Its subcellular location is the cytoplasmic vesicle. The protein resides in the endoplasmic reticulum membrane. In terms of biological role, molecular chaperone which mediates the proper assembly and functional expression of the nicotinic acetylcholine receptors (nAChRs) throughout the brain. Essential for the proper folding, assembly, function and surface trafficking of alpha-7 (CHRNA7), alpha-4-beta-2, alpha-3-beta-2 and alpha-3-beta-4 receptors. The protein is Novel acetylcholine receptor chaperone (tmem35a) of Xenopus tropicalis (Western clawed frog).